The primary structure comprises 279 residues: Eukaryotic translation initiation factor 3 subunit J (279 aa).

Disordered stretches follow at residues 1 to 74 (MSWD…SQKS) and 229 to 279 (ERQA…DDFM). The span at 20 to 39 (WEDEDNDDPLLESWDIDEEE) shows a compositional bias: acidic residues. A coiled-coil region spans residues 34–74 (DIDEEEVARKKKEEEAKKKAEKEALKQKQQEAKNKKLSQKS). Basic and acidic residues predominate over residues 40 to 67 (VARKKKEEEAKKKAEKEALKQKQQEAKN). The span at 268–279 (DDFDDFDDDDFM) shows a compositional bias: acidic residues.

Belongs to the eIF-3 subunit J family. Component of the eukaryotic translation initiation factor 3 (eIF-3) complex.

The protein resides in the cytoplasm. Its function is as follows. Component of the eukaryotic translation initiation factor 3 (eIF-3) complex, which is involved in protein synthesis of a specialized repertoire of mRNAs and, together with other initiation factors, stimulates binding of mRNA and methionyl-tRNAi to the 40S ribosome. The eIF-3 complex specifically targets and initiates translation of a subset of mRNAs involved in cell proliferation. The chain is Eukaryotic translation initiation factor 3 subunit J from Meyerozyma guilliermondii (strain ATCC 6260 / CBS 566 / DSM 6381 / JCM 1539 / NBRC 10279 / NRRL Y-324) (Yeast).